The sequence spans 644 residues: Magnetosome protein MamZ (644 aa).

The major facilitator domain stretch occupies residues 1–427 (MPRNAEAPAK…YAAWLLANGI (427 aa)). The next 18 helical transmembrane spans lie at 22-42 (WNII…SISI), 63-83 (ADIQ…FGLL), 92-112 (IIAL…LSLQ), 113-133 (VGLA…VLLT), 159-179 (LMGN…AIVM), 185-205 (PGGV…GFQL), 254-274 (VIIL…LVGV), 281-301 (AHAA…VPLW), 311-331 (ISAI…LGMF), 337-357 (WLVA…FVTL), 369-389 (ILGA…VMLV), 403-423 (APFI…AWLL), 440-460 (TVDW…WLVG), 478-498 (VGFV…ISLA), 518-538 (IGLF…ALEW), 553-573 (PFIL…FTSA), 588-608 (LHSA…LAAN), and 612-629 (GEPY…WYRF). Residues 488 to 599 (WAFTFLIISL…SATYVINALV (112 aa)) are ferric reductase-like domain.

In the N-terminal section; belongs to the major facilitator superfamily.

The protein localises to the magnetosome membrane. Required for correct biomineralization of the magnetosome; probably converts and then transports some form of iron. It is partially functionally redundant with MamH. May function with MamX, MamY amd Mms6. This Paramagnetospirillum magneticum (strain ATCC 700264 / AMB-1) (Magnetospirillum magneticum) protein is Magnetosome protein MamZ.